Reading from the N-terminus, the 59-residue chain is Zinc finger protein HVO_2753 (59 aa).

Short sequence motifs (c(P)XCG motif) lie at residues 12–16, 29–33, 39–43, and 51–55; these read CVSCG, CPDCG, and CSKCR. Zn(2+)-binding residues include C29 and C32. The Zn(2+) site is built by C51 and C54.

In terms of assembly, monomer in solution.

Its function is as follows. Zinc-binding protein that binds only one zinc ion. Is required for swarming and biofilm formation. In Haloferax volcanii (strain ATCC 29605 / DSM 3757 / JCM 8879 / NBRC 14742 / NCIMB 2012 / VKM B-1768 / DS2) (Halobacterium volcanii), this protein is Zinc finger protein HVO_2753.